The chain runs to 173 residues: Translocon-associated protein subunit delta (173 aa).

Residues 1 to 23 (MAAMASFGALALLLLSGLSCCSA) form the signal peptide. Residues 24 to 144 (EACLEPQITP…SVDHRGTWNG (121 aa)) lie on the Lumenal side of the membrane. Cysteine 26 and cysteine 57 are disulfide-bonded. Lysine 73 participates in a covalent cross-link: Glycyl lysine isopeptide (Lys-Gly) (interchain with G-Cter in ubiquitin). The chain crosses the membrane as a helical span at residues 145–165 (PWVSTEVLAAAIGIVIYYLAF). Residues 166–173 (SAKSHIQA) are Cytoplasmic-facing.

It belongs to the TRAP-delta family. As to quaternary structure, heterotetramer of TRAP-alpha, TRAP-beta, TRAP-delta and TRAP-gamma.

The protein localises to the endoplasmic reticulum membrane. Its function is as follows. TRAP proteins are part of a complex whose function is to bind calcium to the ER membrane and thereby regulate the retention of ER resident proteins. The protein is Translocon-associated protein subunit delta (Ssr4) of Rattus norvegicus (Rat).